Consider the following 142-residue polypeptide: Large ribosomal subunit protein uL13 (142 aa).

This sequence belongs to the universal ribosomal protein uL13 family. In terms of assembly, part of the 50S ribosomal subunit.

Its function is as follows. This protein is one of the early assembly proteins of the 50S ribosomal subunit, although it is not seen to bind rRNA by itself. It is important during the early stages of 50S assembly. This is Large ribosomal subunit protein uL13 from Shewanella frigidimarina (strain NCIMB 400).